The primary structure comprises 425 residues: Histone-binding protein RBBP4 (425 aa).

Alanine 2 bears the N-acetylalanine mark. Lysine 4 carries the N6-acetyllysine; alternate modification. Lysine 4 is covalently cross-linked (Glycyl lysine isopeptide (Lys-Gly) (interchain with G-Cter in SUMO2); alternate). A Glycyl lysine isopeptide (Lys-Gly) (interchain with G-Cter in ubiquitin); alternate cross-link involves residue lysine 4. 7 WD repeats span residues 32–125 (YDLV…NHEG), 126–175 (EVNR…RLRG), 176–223 (HQKE…KTIF), 225–270 (GHTA…HSVD), 271–314 (AHTA…HSFE), 315–371 (SHKD…FIHG), and 372–404 (GHTAKISDFSWNPNEPWVICSVSEDNIMQVWQM). Serine 110 bears the Phosphoserine mark. Position 160 is an N6-acetyllysine; alternate (lysine 160). Residue lysine 160 forms a Glycyl lysine isopeptide (Lys-Gly) (interchain with G-Cter in SUMO2); alternate linkage. Residue serine 355 is modified to Phosphoserine.

It belongs to the WD repeat RBAP46/RBAP48/MSI1 family. In terms of assembly, binds directly to helix 1 of the histone fold of histone H4, a region that is not accessible when H4 is in chromatin. Subunit of the chromatin assembly factor 1 (CAF-1) complex, which is composed of RBBP4, CHAF1B and CHAF1A. Subunit of the core histone deacetylase (HDAC) complex, which is composed of HDAC1, HDAC2, RBBP4 and RBBP7. The core HDAC complex associates with SIN3A, ARID4B/SAP180, SAP18, SAP30, SAP130, SUDS3/SAP45 and possibly ARID4A/RBP1 and ING1 to form the SIN3 HDAC complex. Component of the nucleosome remodeling and deacetylase (NuRD) repressor complex, composed of core proteins MTA1, MTA2, MTA3, RBBP4, RBBP7, HDAC1, HDAC2, MBD2, MBD3, and peripherally associated proteins CDK2AP1, CDK2AP2, GATAD2A, GATAD2B, CHD3, CHD4 and CHD5. The exact stoichiometry of the NuRD complex is unknown, and some subunits such as MBD2 and MBD3, GATAD2A and GATAD2B, and CHD3, CHD4 and CHD5 define mutually exclusive NuRD complexes. Interacts with ZNF512B; the interaction is direct and may play a role in repressing gene expression. The NuRD complex may also interact with MBD3L1 and MBD3L2. Component of the PRC2 complex, which consists of the core subunits EED, EZH1 or EZH2, SUZ12, and RBBP4, and various combinations of accessory subunits including AEBP2, JARID2, PHF19, MTF2 and EPOP. Forms a monomeric PRC2.2 (class 2) complex consisting of at least SUZ12, RBBP4, AEBP2 and JARID2. Forms a dimeric PRC2.1 (class 1, PRC-PCL) complex consisting of at least SUZ12, RBBP4, and PHF19; PHF19 stabilizes the dimeric structure which enhances PRC2 interaction with chromatin. Component of the NURF-1 ISWI chromatin remodeling complex (also called the nucleosome-remodeling factor (NURF) complex) at least composed of SMARCA1 (isoform 2), BPTF, RBBP4 and RBBP7. Within the complex interacts with isoform 2 of SMARCA1. Component of the BPFT-SMARCA1 complex at least composed of SMARCA1 (isoform 1), BPFT, RBBP4 and RBBP7; the complex is catalytically inactive and does not remodel chromatin. Within the complex interacts with isoform 1 of SMARCA1. Interacts with the ISWI chromatin remodeling complex component SMARCA5; the interaction is direct. Interacts with the viral protein-binding domain of the retinoblastoma protein (RB1). Component of the DREAM complex (also named LINC complex) at least composed of E2F4, E2F5, LIN9, LIN37, LIN52, LIN54, MYBL1, MYBL2, RBL1, RBL2, RBBP4, TFDP1 and TFDP2. The complex exists in quiescent cells where it represses cell cycle-dependent genes. It dissociates in S phase when LIN9, LIN37, LIN52 and LIN54 form a subcomplex that binds to MYBL2. Found in a complex composed of at least SINHCAF, SIN3A, HDAC1, SAP30, RBBP4, OGT and TET1. Interacts with ZNF827; the interaction is direct and recruits RBBP4 to telomeres. Interacts with MTA1; the interaction is direct and mutually exclusive with binding histone H4. Interacts with ARMC12 (via ARM domains). Interacts with BRCA1. Interacts with CDK2AP1. Interacts with CREBBP, and this interaction may be enhanced by the binding of phosphorylated CREB1 to CREBBP. Interacts with ERCC6. Interacts with HDAC7. Interacts with PHF6. Interacts with PWWP2B. Interacts with SPEN/MINT. Interacts with SUV39H1.

Its subcellular location is the nucleus. The protein localises to the chromosome. It is found in the telomere. In terms of biological role, core histone-binding subunit that may target chromatin assembly factors, chromatin remodeling factors and histone deacetylases to their histone substrates in a manner that is regulated by nucleosomal DNA. Component of the chromatin assembly factor 1 (CAF-1) complex, which is required for chromatin assembly following DNA replication and DNA repair. Component of the core histone deacetylase (HDAC) complex, which promotes histone deacetylation and consequent transcriptional repression. Component of the nucleosome remodeling and histone deacetylase complex (the NuRD complex), which promotes transcriptional repression by histone deacetylation and nucleosome remodeling. Component of the PRC2 complex, which promotes repression of homeotic genes during development. Component of the NURF (nucleosome remodeling factor) complex. This is Histone-binding protein RBBP4 (RBBP4) from Pongo abelii (Sumatran orangutan).